The chain runs to 63 residues: Large ribosomal subunit protein uL29 (63 aa).

This sequence belongs to the universal ribosomal protein uL29 family.

The sequence is that of Large ribosomal subunit protein uL29 from Yersinia enterocolitica serotype O:8 / biotype 1B (strain NCTC 13174 / 8081).